The sequence spans 93 residues: Beta-defensin 128 (93 aa).

The N-terminal stretch at 1-18 (MKLFLVLIILLFEVLTDG) is a signal peptide. Cystine bridges form between Cys24–Cys52, Cys32–Cys46, and Cys36–Cys53.

This sequence belongs to the beta-defensin family.

It is found in the secreted. In terms of biological role, has antibacterial activity. This Pongo pygmaeus (Bornean orangutan) protein is Beta-defensin 128 (DEFB128).